The chain runs to 417 residues: Equilibrative nucleotide transporter 7 (417 aa).

Helical transmembrane passes span 19–39, 54–74, 84–104, 110–130, 143–163, 184–204, 264–284, 293–315, 326–346, 353–373, and 392–412; these read LVCCFLGVGSLVAWNAMLTIT, VLTIVYQLVANVFIITLATKE, IFGYSLYTAGTFCLIILDLAS, VVAYVLLCLIVALFGLADAFV, PDFIQAFMAGLGIAGALTSVL, LFIGIATLIELACVFLYTLVF, LGINLSLIYVVTLSIFPGFLY, GDWYAPVLVAMYNGWDAISRFIP, KWITVCVVARLLLVPAFYFTA, WMLFLTSFLGLSNGYLTVCIF, and MCVFLLGGIFAGVCLGWLWLI.

This sequence belongs to the SLC29A/ENT transporter (TC 2.A.57) family. As to expression, expressed in leaves and flowers.

Its subcellular location is the cell membrane. Functionally, nucleoside transporter that can mediate uptake of adenosine, uridine, guanosine or cytidine when expressed in a heterologous system (yeast). The protein is Equilibrative nucleotide transporter 7 (ENT7) of Arabidopsis thaliana (Mouse-ear cress).